The following is a 266-amino-acid chain: N-acetylneuraminate lyase B (266 aa).

Residues Thr51 and Thr52 each coordinate aceneuramate. Tyr143 acts as the Proton donor in catalysis. Lys173 (schiff-base intermediate with substrate) is an active-site residue. Residues Ser175, Gly197, Asp199, Glu200, and Ser216 each coordinate aceneuramate.

The protein belongs to the DapA family. NanA subfamily. Homotetramer.

The protein resides in the cytoplasm. The enzyme catalyses aceneuramate = aldehydo-N-acetyl-D-mannosamine + pyruvate. It functions in the pathway amino-sugar metabolism; N-acetylneuraminate degradation. In terms of biological role, catalyzes the cleavage of N-acetylneuraminic acid (sialic acid) to form pyruvate and N-acetylmannosamine via a Schiff base intermediate. It prevents sialic acids from being recycled and returning to the cell surface. Involved in the N-glycolylneuraminic acid (Neu5Gc) degradation pathway. This is N-acetylneuraminate lyase B (npl-b) from Xenopus laevis (African clawed frog).